A 209-amino-acid polypeptide reads, in one-letter code: Ribonuclease HII (209 aa).

The region spanning 18–209 is the RNase H type-2 domain; that stretch reads SLVAGVDEVG…FKPVKALLER (192 aa). Positions 24, 25, and 116 each coordinate a divalent metal cation.

It belongs to the RNase HII family. Requires Mn(2+) as cofactor. Mg(2+) is required as a cofactor.

The protein localises to the cytoplasm. It catalyses the reaction Endonucleolytic cleavage to 5'-phosphomonoester.. Endonuclease that specifically degrades the RNA of RNA-DNA hybrids. The polypeptide is Ribonuclease HII (Shewanella oneidensis (strain ATCC 700550 / JCM 31522 / CIP 106686 / LMG 19005 / NCIMB 14063 / MR-1)).